Consider the following 467-residue polypeptide: ESX-4 secretion system protein eccD4 (467 aa).

11 consecutive transmembrane segments (helical) span residues 122–142 (GALA…RNAL), 152–172 (ATAG…VIAC), 186–206 (VIAT…VPGV), 209–229 (VLVA…ITGC), 241–261 (AVVV…VPAI), 264–284 (LATL…VLLA), 319–339 (LTSL…GTAV), 344–364 (IHRS…LLLL), 374–394 (SLVF…VAAD), 401–421 (PWIA…GFVA), and 439–459 (CLAL…YSAV).

This sequence belongs to the EccD/Snm4 family. Part of the ESX-4 / type VII secretion system (T7SS), which is composed of cytosolic and membrane components.

The protein localises to the cell membrane. The sequence is that of ESX-4 secretion system protein eccD4 (eccD4) from Mycobacterium tuberculosis (strain CDC 1551 / Oshkosh).